The chain runs to 122 residues: MIQQESRLKVADNTGAREILCIRVLGGSTRRFAGIGDVIVATVKEATPGGNVKSGEIVKAVIVRTKKETRRADGSYISFDENAAVIIKNDNEPRGTRIFGPVARELREKKFMKIVSLAPEVI.

It belongs to the universal ribosomal protein uL14 family. Part of the 50S ribosomal subunit. Forms a cluster with proteins L3 and L19. In the 70S ribosome, L14 and L19 interact and together make contacts with the 16S rRNA in bridges B5 and B8.

Functionally, binds to 23S rRNA. Forms part of two intersubunit bridges in the 70S ribosome. This Corynebacterium glutamicum (strain R) protein is Large ribosomal subunit protein uL14.